A 315-amino-acid polypeptide reads, in one-letter code: 1,2-dihydroxy-3,5-cyclohexadiene-1,4-dicarboxylate dehydrogenase (315 aa).

A divalent metal cation is bound by residues H159, H203, and H255.

It belongs to the PdxA family.

It catalyses the reaction (3S,4R)-3,4-dihydroxycyclohexa-1,5-diene-1,4-dicarboxylate + NAD(+) = 3,4-dihydroxybenzoate + CO2 + NADH. In terms of biological role, involved in the degradation of terephthalate (TPA) via the protocatechuate (PCA) 4,5-cleavage pathway. Catalyzes the dehydrogenation of 1,2-dihydroxy-3,5-cyclohexadiene-1,4-dicarboxylate (DCD) to yield protocatechuate (PCA). In Comamonas sp, this protein is 1,2-dihydroxy-3,5-cyclohexadiene-1,4-dicarboxylate dehydrogenase (tphBI).